We begin with the raw amino-acid sequence, 97 residues long: Large ribosomal subunit protein uL23 (97 aa).

The protein belongs to the universal ribosomal protein uL23 family. As to quaternary structure, part of the 50S ribosomal subunit. Contacts protein L29, and trigger factor when it is bound to the ribosome.

One of the early assembly proteins it binds 23S rRNA. One of the proteins that surrounds the polypeptide exit tunnel on the outside of the ribosome. Forms the main docking site for trigger factor binding to the ribosome. This Allorhizobium ampelinum (strain ATCC BAA-846 / DSM 112012 / S4) (Agrobacterium vitis (strain S4)) protein is Large ribosomal subunit protein uL23.